Consider the following 126-residue polypeptide: Major sperm protein 1 (126 aa).

N-acetylalanine is present on A2. An MSP domain is found at D8 to N125.

As to expression, sperm.

It is found in the cell projection. The protein resides in the pseudopodium. The protein localises to the cytoplasm. It localises to the cytoskeleton. In terms of biological role, central component in molecular interactions underlying sperm crawling. Forms an extensive filament system that extends from sperm villipoda, along the leading edge of the pseudopod. The sequence is that of Major sperm protein 1 (MSP-1) from Globodera rostochiensis (Golden nematode worm).